The chain runs to 126 residues: MSFDVPADRRYLESHEWAQPDDDVVRVGITDFAQDELGDIVFVELPSVGDRIEHEAEFGVIESIKAVSDLYAPVSGEVVAVNDDLEDAPELVNDDPFGDGWLLEVEADGDDYESLLTADEYEAQIA.

The region spanning 24 to 106 (VVRVGITDFA…FGDGWLLEVE (83 aa)) is the Lipoyl-binding domain. Lys65 is modified (N6-lipoyllysine).

The protein belongs to the GcvH family. The glycine cleavage system is composed of four proteins: P, T, L and H. (R)-lipoate serves as cofactor.

In terms of biological role, the glycine cleavage system catalyzes the degradation of glycine. The H protein shuttles the methylamine group of glycine from the P protein to the T protein. This Natronomonas pharaonis (strain ATCC 35678 / DSM 2160 / CIP 103997 / JCM 8858 / NBRC 14720 / NCIMB 2260 / Gabara) (Halobacterium pharaonis) protein is Probable glycine cleavage system H protein.